A 270-amino-acid polypeptide reads, in one-letter code: Decarboxylase NovR (270 aa).

The protein belongs to the aldolase class II family.

Its pathway is antibiotic biosynthesis; novobiocin biosynthesis. Its function is as follows. May mediate the 2 consecutive oxidative decarboxylation steps in the biosynthesis of the prenylated hydroxybenzoic acid moiety of novobiocin, an aminocoumarin family antibiotic that targets bacterial DNA gyrases. The sequence is that of Decarboxylase NovR (novR) from Streptomyces niveus (Streptomyces spheroides).